We begin with the raw amino-acid sequence, 182 residues long: Keratin, high-sulfur matrix protein, B2D (182 aa).

6 consecutive repeat copies span residues 27 to 36, 37 to 46, 47 to 56, 57 to 66, 67 to 76, and 77 to 86. Residues 27–86 form a 6 X 10 AA tandem repeats region; that stretch reads PTCCQTSCCQPTSIQTSCCQPTSIQTSCCQPTSIQTSCCQPISIQTSCCQPTCLQTSGCE.

In terms of biological role, the keratin products of mammalian epidermal derivatives such as wool and hair consist of microfibrils embedded in a rigid matrix of other proteins. The matrix proteins include the high-sulfur and high-tyrosine keratins, having molecular weights of 6-20 kDa, whereas the microfibrils contain the larger, low-sulfur keratins (40-56 kDa). The sequence is that of Keratin, high-sulfur matrix protein, B2D from Ovis aries (Sheep).